Reading from the N-terminus, the 986-residue chain is Replication factor C subunit 1 (986 aa).

The segment at 1-95 (MQRGIDSFFK…ALSKLKRHVD (95 aa)) is disordered. Phosphoserine occurs at positions 18, 28, 40, 41, 48, and 58. Position 60 is a phosphothreonine (Thr-60). Phosphoserine occurs at positions 62 and 63. At Thr-71 the chain carries Phosphothreonine. A phosphoserine mark is found at Ser-128, Ser-137, Ser-149, Ser-154, Ser-156, Ser-164, and Ser-194. Positions 136 to 147 (ESIKEAAPEKKV) are enriched in basic and acidic residues. Disordered regions lie at residues 136–203 (ESIK…ERHE) and 317–388 (KQVK…NDVP). Thr-197 is subject to Phosphothreonine. The region spanning 232–322 (GSPDCLSGLT…SGIAKQVKEE (91 aa)) is the BRCT domain. Basic and acidic residues-rich tracts occupy residues 317 to 364 (KQVK…EKHD) and 370 to 385 (VKEE…DKLN). Position 487–494 (487–494 (GPPGIGKT)) interacts with ATP. Positions 913 to 986 (SEAAGADDDY…ASKSKAKAKK (74 aa)) are disordered. Over residues 917–932 (GADDDYLDEGPGEEDG) the composition is skewed to acidic residues. Ser-938 and Ser-939 each carry phosphoserine. The Nuclear localization signal motif lies at 955–959 (KAKKR). Positions 962 to 979 (TSKASGGSKKATSSTASK) are enriched in low complexity.

It belongs to the activator 1 large subunit family. As to quaternary structure, interacts with C-terminus of PCNA.

It localises to the nucleus. The elongation of primed DNA templates by DNA polymerase delta and epsilon requires the action of the accessory proteins proliferating cell nuclear antigen (PCNA) and activator 1. This subunit binds to the primer-template junction. This is Replication factor C subunit 1 (Gnf1) from Drosophila melanogaster (Fruit fly).